Reading from the N-terminus, the 811-residue chain is Ribonucleoside-diphosphate reductase large subunit (811 aa).

Residues Thr-231, 246–247 (SC), Gly-277, 450–454 (NLCTE), and 636–640 (PTASS) contribute to the substrate site. The cysteines at positions 247 and 467 are disulfide-linked. Asn-450 serves as the catalytic Proton acceptor. The Cysteine radical intermediate role is filled by Cys-452. The active-site Proton acceptor is Glu-454.

It belongs to the ribonucleoside diphosphate reductase large chain family. Heterotetramer composed of a homodimer of the large subunit (R1) and a homodimer of the small subunit (R2). Larger multisubunit protein complex are also active, composed of (R1)n(R2)n.

It carries out the reaction a 2'-deoxyribonucleoside 5'-diphosphate + [thioredoxin]-disulfide + H2O = a ribonucleoside 5'-diphosphate + [thioredoxin]-dithiol. Its function is as follows. Ribonucleoside-diphosphate reductase holoenzyme provides the precursors necessary for viral DNA synthesis. Allows virus growth in non-dividing cells, as well as reactivation from latency in infected hosts. Catalyzes the biosynthesis of deoxyribonucleotides from the corresponding ribonucleotides. This Amazona oratrix (yellow-headed parrot) protein is Ribonucleoside-diphosphate reductase large subunit.